A 490-amino-acid polypeptide reads, in one-letter code: Serine palmitoyltransferase 2 (490 aa).

The helical transmembrane segment at Val-10–Phe-30 threads the bilayer. Lys-321 bears the N6-(pyridoxal phosphate)lysine mark.

Belongs to the class-II pyridoxal-phosphate-dependent aminotransferase family. Forms a heterodimer with sptA. The cofactor is pyridoxal 5'-phosphate.

It localises to the endoplasmic reticulum membrane. It catalyses the reaction L-serine + hexadecanoyl-CoA + H(+) = 3-oxosphinganine + CO2 + CoA. It functions in the pathway lipid metabolism; sphingolipid metabolism. In terms of biological role, catalytic subunit of serine palmitoyltransferase (SPT), which catalyzes the committed step in the synthesis of sphingolipids, the condensation of serine with palmitoyl CoA to form the long chain base 3-ketosphinganine. This chain is Serine palmitoyltransferase 2 (sptB), found in Dictyostelium discoideum (Social amoeba).